The following is a 281-amino-acid chain: Proteasome subunit beta (281 aa).

Positions 1–53 are cleaved as a propeptide — removed in mature form; by autocatalysis; it reads MEANTRSTGRLPAAFLTPGSSSFMDFLSDQSPEMLPGNRSLPPLQGAVEAPHG. Catalysis depends on Thr-54, which acts as the Nucleophile.

This sequence belongs to the peptidase T1B family. In terms of assembly, the 20S proteasome core is composed of 14 alpha and 14 beta subunits that assemble into four stacked heptameric rings, resulting in a barrel-shaped structure. The two inner rings, each composed of seven catalytic beta subunits, are sandwiched by two outer rings, each composed of seven alpha subunits. The catalytic chamber with the active sites is on the inside of the barrel. Has a gated structure, the ends of the cylinder being occluded by the N-termini of the alpha-subunits. Is capped by the proteasome-associated ATPase, ARC.

The protein localises to the cytoplasm. The catalysed reaction is Cleavage of peptide bonds with very broad specificity.. The protein operates within protein degradation; proteasomal Pup-dependent pathway. Its activity is regulated as follows. The formation of the proteasomal ATPase ARC-20S proteasome complex, likely via the docking of the C-termini of ARC into the intersubunit pockets in the alpha-rings, may trigger opening of the gate for substrate entry. Interconversion between the open-gate and close-gate conformations leads to a dynamic regulation of the 20S proteasome proteolysis activity. Functionally, component of the proteasome core, a large protease complex with broad specificity involved in protein degradation. This Streptomyces griseus subsp. griseus (strain JCM 4626 / CBS 651.72 / NBRC 13350 / KCC S-0626 / ISP 5235) protein is Proteasome subunit beta.